A 1157-amino-acid polypeptide reads, in one-letter code: Hephaestin (1157 aa).

Positions 1–23 (MKAGHLLWALLLMHSLCSLPTDG) are cleaved as a signal peptide. Plastocyanin-like domains lie at 24-206 (AIRN…LITC), 218-366 (QRKD…VDSC), 370-559 (PPVE…LLVC), 569-717 (KQKG…VSQC), 730-902 (ASRV…LVIC), and 910-1066 (NGGR…SHEE). Residues 24 to 1109 (AIRNYYLGIQ…PVKNVEILSS (1086 aa)) are Extracellular-facing. N-linked (GlcNAc...) asparagine glycans are attached at residues Asn49 and Asn54. Positions 70 and 73 each coordinate Na(+). Residues His126 and His128 each contribute to the Cu(2+) site. An O2-binding site is contributed by His126. 3 residues coordinate Ca(2+): Lys134, Asp152, and Asp153. A glycan (N-linked (GlcNAc...) asparagine) is linked at Asn164. Cys180 and Cys206 are oxidised to a cystine. Cu(2+) is bound by residues His186 and His188. An O2-binding site is contributed by His186. N-linked (GlcNAc...) asparagine glycosylation occurs at Asn236. Ser265 lines the Na(+) pocket. Residues Cys285 and Cys366 are joined by a disulfide bond. Cu(2+) contacts are provided by His304, Cys347, and His352. The Na(+) site is built by Tyr416, Gly425, and Tyr428. Cys533 and Cys559 are joined by a disulfide. N-linked (GlcNAc...) asparagine glycosylation occurs at Asn587. Ser616 provides a ligand contact to Na(+). The cysteines at positions 636 and 717 are disulfide-linked. Cu(2+) is bound by residues His655, Cys698, His703, and Met708. Residues Asn713 and Asn757 are each glycosylated (N-linked (GlcNAc...) asparagine). Na(+) contacts are provided by Phe768 and Gly777. A disulfide bond links Cys876 and Cys902. N-linked (GlcNAc...) asparagine glycosylation occurs at Asn930. His999, His1002, His1004, His1044, Cys1045, His1046, His1050, and Met1055 together coordinate Cu(2+). Positions 1002 and 1004 each coordinate O2. O2 is bound at residue His1046. Residues 1110–1130 (ALIAICVVLLLIALALGGVVW) form a helical membrane-spanning segment. Over 1131 to 1157 (YQHRQRKLRRNRRSILDDSFKLLSLKQ) the chain is Cytoplasmic. Phosphoserine is present on residues Ser1144, Ser1149, and Ser1154.

This sequence belongs to the multicopper oxidase family. In terms of assembly, part of a complex composed of SLC40A1/ferroportin, TF/transferrin and HEPH/hephaestin that transfers iron from cells to transferrin. Requires Cu cation as cofactor. In terms of tissue distribution, highly expressed in small intestine and colon.

It localises to the basolateral cell membrane. It catalyses the reaction 4 Fe(2+) + O2 + 4 H(+) = 4 Fe(3+) + 2 H2O. Plasma membrane ferroxidase that mediates the extracellular conversion of ferrous/Fe(2+) iron into its ferric/Fe(3+) form. Couples ferroportin which specifically exports ferrous/Fe(2+) iron from cells to transferrin that only binds and shuttles extracellular ferric/Fe(3+) iron throughout the body. By helping iron transfer from cells to blood mainly contributes to dietary iron absorption by the intestinal epithelium and more generally regulates iron levels in the body. The sequence is that of Hephaestin from Rattus norvegicus (Rat).